Consider the following 428-residue polypeptide: Glutamyl-tRNA reductase (428 aa).

Residues 50-53 (TCNR), Ser110, 115-117 (ETQ), and Gln121 each bind substrate. Cys51 (nucleophile) is an active-site residue. 190 to 195 (GAGEMG) is a binding site for NADP(+).

It belongs to the glutamyl-tRNA reductase family. In terms of assembly, homodimer.

The enzyme catalyses (S)-4-amino-5-oxopentanoate + tRNA(Glu) + NADP(+) = L-glutamyl-tRNA(Glu) + NADPH + H(+). Its pathway is porphyrin-containing compound metabolism; protoporphyrin-IX biosynthesis; 5-aminolevulinate from L-glutamyl-tRNA(Glu): step 1/2. Functionally, catalyzes the NADPH-dependent reduction of glutamyl-tRNA(Glu) to glutamate 1-semialdehyde (GSA). The protein is Glutamyl-tRNA reductase of Campylobacter curvus (strain 525.92).